The chain runs to 334 residues: MNIKEQIINLPKVELHCHLDGSLRPETVLDLCLKENINIPYENPEDFKSSLKISKNCSSLKEYLEKFYFPIRVMQKKENIYRVTMELLEDSKKDGIEYTEIRFAPFQHTEQDLNENDVVEAALEALQDGESKLGIHSNLILCSLRHDPVERSIDLVNLANSYNEGVCAVDLAGNESDFPPELHKEAFDLAYDNGIKITIHAGETGIAENILKSIKLLHADRIGHGIFAYKSEEILQYVIENQVPLEMCPKSNVDTKAVKNYKNHPFKKYFDLGVKVTLNTDNRTVSNVSLVDEYLNLANIFDFGIEEIKTVIRNGISASFATEEFKVNLLKKLD.

The Zn(2+) site is built by His-16 and His-18. Substrate is bound by residues His-18, Asp-20, and Gly-173. His-200 provides a ligand contact to Zn(2+). Residue Glu-203 is the Proton donor of the active site. Asp-281 serves as a coordination point for Zn(2+).

The protein belongs to the metallo-dependent hydrolases superfamily. Adenosine and AMP deaminases family. Adenosine deaminase subfamily. It depends on Zn(2+) as a cofactor.

It catalyses the reaction adenosine + H2O + H(+) = inosine + NH4(+). It carries out the reaction 2'-deoxyadenosine + H2O + H(+) = 2'-deoxyinosine + NH4(+). In terms of biological role, catalyzes the hydrolytic deamination of adenosine and 2-deoxyadenosine. This chain is Adenosine deaminase, found in Clostridium acetobutylicum (strain ATCC 824 / DSM 792 / JCM 1419 / IAM 19013 / LMG 5710 / NBRC 13948 / NRRL B-527 / VKM B-1787 / 2291 / W).